The following is a 430-amino-acid chain: Putative aspergillopepsin A-like aspartic endopeptidase MCYG_07979 (430 aa).

The first 17 residues, 1-17 (MHLSSLLVAVLLPLALS), serve as a signal peptide directing secretion. The propeptide at 18–87 (KPTPRKKPGS…SKIAGGAPGA (70 aa)) is activation peptide. The segment at 59-105 (STQGMDGYRPEPISRFQGNSKIAGGAPGAKDDGKDEKGEVENNPTSH) is disordered. A compositionally biased stretch (basic and acidic residues) spans 87–98 (AKDDGKDEKGEV). The Peptidase A1 domain maps to 109–427 (FLSPVTIGGQ…DYRGPSVSLA (319 aa)). Asp-125 is an active-site residue. A glycan (N-linked (GlcNAc...) asparagine) is linked at Asn-306. Asp-314 is a catalytic residue. Residue Asn-352 is glycosylated (N-linked (GlcNAc...) asparagine).

It belongs to the peptidase A1 family.

The protein resides in the secreted. The protein is Putative aspergillopepsin A-like aspartic endopeptidase MCYG_07979 of Arthroderma otae (strain ATCC MYA-4605 / CBS 113480) (Microsporum canis).